A 754-amino-acid polypeptide reads, in one-letter code: Lysophospholipase 3 (754 aa).

Positions 1–19 are cleaved as a signal peptide; that stretch reads MKVNLKLIIGSILISQAQA. Composition is skewed to low complexity over residues 25 to 40 and 50 to 88; these read SSGS…SETG and LFGS…SSNS. Positions 25–88 are disordered; that stretch reads SSGSSSSSDS…DSSLFSSSNS (64 aa). Asparagine 112, asparagine 156, asparagine 174, asparagine 317, asparagine 325, asparagine 354, asparagine 391, asparagine 423, asparagine 470, asparagine 510, asparagine 515, asparagine 560, asparagine 577, asparagine 597, asparagine 625, and asparagine 631 each carry an N-linked (GlcNAc...) asparagine glycan. In terms of domain architecture, PLA2c spans 114 to 670; sequence TCPSKKTFIR…QEYCWTGGFK (557 aa). A compositionally biased stretch (low complexity) spans 687 to 721; sequence KTHTSGGTSSTTQQTSTTTGSSANGGSSSTGSSSS. A disordered region spans residues 687-727; it reads KTHTSGGTSSTTQQTSTTTGSSANGGSSSTGSSSSSKKKNG.

The protein belongs to the lysophospholipase family.

The protein localises to the secreted. It carries out the reaction a 1-acyl-sn-glycero-3-phosphocholine + H2O = sn-glycerol 3-phosphocholine + a fatty acid + H(+). Its function is as follows. Catalyzes the release of fatty acids from lysophospholipids. Phospholipase B may well contribute to pathogenicity by abetting the fungus in damaging and traversing host cell membranes, processes which likely increase the rapidity of disseminated infection. The protein is Lysophospholipase 3 (PLB3) of Candida albicans (Yeast).